The primary structure comprises 501 residues: Protein disulfide isomerase-like 1-1 (501 aa).

The N-terminal stretch at 1–23 is a signal peptide; that stretch reads MAMRGFTLFSILVLSLCASSIRS. A Thioredoxin 1 domain is found at 24-141; that stretch reads EETETKEFVL…IVTYLKKQSG (118 aa). A glycan (N-linked (GlcNAc...) asparagine) is linked at N39. Residues C59 and C62 each act as nucleophile in the active site. Residues C59 and C62 are joined by a disulfide bond. N-linked (GlcNAc...) asparagine glycosylation is present at N275. A Thioredoxin 2 domain is found at 354 to 482; sequence FKDGKIAPHK…FISFVDKNKD (129 aa). Residues C404 and C407 each act as nucleophile in the active site. C404 and C407 are disulfide-bonded. A Prevents secretion from ER motif is present at residues 498–501; that stretch reads KDEL.

It belongs to the protein disulfide isomerase family. In terms of assembly, interacts with RD21A, At3g19390, At5g43060. As to expression, highly expressed in flowers, stems and immature seeds, and at lower levels in leaves and siliques (at protein level).

It is found in the endoplasmic reticulum lumen. It localises to the vacuole. The enzyme catalyses Catalyzes the rearrangement of -S-S- bonds in proteins.. Functionally, protein disulfide isomerase that associates with RD21A protease for trafficking from the ER through the Golgi to lytic and protein storage vacuoles of endothelial cells in developing seeds. Regulates the timing of programmed cell death (PCD) of the endothelial cells by chaperoning and inhibiting cysteine proteases during their trafficking to vacuoles. The chain is Protein disulfide isomerase-like 1-1 (PDIL1-1) from Arabidopsis thaliana (Mouse-ear cress).